A 671-amino-acid chain; its full sequence is MESIEQQLTELRTTLRHHEYLYHVMDAPEIPDAEYDRLMRELRELETKHPELITPDSPTQRVGAAPLAAFSQIRHEVPMLSLDNVFDEESFLAFNKRVQDRLKNNEKVTWCCELKLDGLAVSILYENGVLVSAATRGDGTTGEDITSNVRTIRAIPLKLHGENIPARLEVRGEVFLPQAGFEKINEDARRTGGKVFANPRNAAAGSLRQLDPRITAKRPLTFFCYGVGVLEGGELPDTHLGRLLQFKKWGLPVSDRVTLCESAEEVLAFYHKVEEDRPTLGFDIDGVVIKVNSLAQQEQLGFVARAPRWAVAFKFPAQEQMTFVRDVEFQVGRTGAITPVARLEPVHVAGVLVSNATLHNADEIERLGLRIGDKVVIRRAGDVIPQVVNVVLSERPEDTREVVFPTHCPVCGSDVERVEGEAVARCTGGLICGAQRKESLKHFVSRRAMDVDGMGDKIIDQLVEKEYVHTPADLFKLTAGKLTGLERMGPKSAQNVVNALEKAKETTFARFLYALGIREVGEATAAGLAAYFGTLEALEAASIEELQKVPDVGIVVASHVHNFFAEESNRNVISELLAEGVHWPAPIVINAEEIDSPFAGKTVVLTGSLSQMSRDDAKARLVELGAKVAGSVSKKTDLVIAGEAAGSKLAKAQELGIEVIDEAEMLRLLGS.

NAD(+) is bound by residues 32–36 (DAEYD), 81–82 (SL), and E113. K115 (N6-AMP-lysine intermediate) is an active-site residue. NAD(+) contacts are provided by R136, E173, K290, and K314. 4 residues coordinate Zn(2+): C408, C411, C426, and C432. The region spanning 593–671 (EIDSPFAGKT…EAEMLRLLGS (79 aa)) is the BRCT domain.

Belongs to the NAD-dependent DNA ligase family. LigA subfamily. Mg(2+) is required as a cofactor. The cofactor is Mn(2+).

It catalyses the reaction NAD(+) + (deoxyribonucleotide)n-3'-hydroxyl + 5'-phospho-(deoxyribonucleotide)m = (deoxyribonucleotide)n+m + AMP + beta-nicotinamide D-nucleotide.. Functionally, DNA ligase that catalyzes the formation of phosphodiester linkages between 5'-phosphoryl and 3'-hydroxyl groups in double-stranded DNA using NAD as a coenzyme and as the energy source for the reaction. It is essential for DNA replication and repair of damaged DNA. This Escherichia coli (strain ATCC 8739 / DSM 1576 / NBRC 3972 / NCIMB 8545 / WDCM 00012 / Crooks) protein is DNA ligase.